Reading from the N-terminus, the 93-residue chain is MRPIHICLNVRFLFFRPIYACNIDFITLAFAVRKSLFDDPLNPLAIFKTLFLSYSSYTTSFNSHESPCIKSFTNSTLKINIYKILVNLPYLQK.

Its subcellular location is the plastid. The protein resides in the chloroplast. This is an uncharacterized protein from Diacronema lutheri (Unicellular marine alga).